Consider the following 263-residue polypeptide: Endonuclease 8 (263 aa).

P2 acts as the Schiff-base intermediate with DNA in catalysis. E3 (proton donor) is an active-site residue. K53 functions as the Proton donor; for beta-elimination activity in the catalytic mechanism. Q70, R125, and N169 together coordinate DNA. The FPG-type zinc finger occupies 229–263 (KVFHRDGEACERCGGIIEKTTLSSRPFYWCPHCQK). Catalysis depends on R253, which acts as the Proton donor; for delta-elimination activity.

It belongs to the FPG family. The cofactor is Zn(2+).

It carries out the reaction 2'-deoxyribonucleotide-(2'-deoxyribose 5'-phosphate)-2'-deoxyribonucleotide-DNA = a 3'-end 2'-deoxyribonucleotide-(2,3-dehydro-2,3-deoxyribose 5'-phosphate)-DNA + a 5'-end 5'-phospho-2'-deoxyribonucleoside-DNA + H(+). In terms of biological role, involved in base excision repair of DNA damaged by oxidation or by mutagenic agents. Acts as a DNA glycosylase that recognizes and removes damaged bases. Has a preference for oxidized pyrimidines, such as thymine glycol, 5,6-dihydrouracil and 5,6-dihydrothymine. Has AP (apurinic/apyrimidinic) lyase activity and introduces nicks in the DNA strand. Cleaves the DNA backbone by beta-delta elimination to generate a single-strand break at the site of the removed base with both 3'- and 5'-phosphates. In Salmonella agona (strain SL483), this protein is Endonuclease 8.